Here is a 148-residue protein sequence, read N- to C-terminus: MPSTIFVLNGPNLNALGKREPGIYGGKTLADIEAMCKEEAKLLGFDVDFRQSNHEGTLVDWLHEAGEKAVGIAINPAAYGHTSIAMHDAIRAITVPVVELHLSNIHAREEFRHKSMIAPAVKGVICGFGAQSYILALHALKNLTEKSK.

The Proton acceptor role is filled by Y24. Residues N75, H81, and D88 each contribute to the substrate site. The active-site Proton donor is H101. Residues 102–103 and R112 each bind substrate; that span reads LS.

It belongs to the type-II 3-dehydroquinase family. As to quaternary structure, homododecamer.

The enzyme catalyses 3-dehydroquinate = 3-dehydroshikimate + H2O. It participates in metabolic intermediate biosynthesis; chorismate biosynthesis; chorismate from D-erythrose 4-phosphate and phosphoenolpyruvate: step 3/7. Catalyzes a trans-dehydration via an enolate intermediate. This is 3-dehydroquinate dehydratase from Rhizobium meliloti (strain 1021) (Ensifer meliloti).